The sequence spans 466 residues: 3-isopropylmalate dehydratase large subunit (466 aa).

Positions 347, 407, and 410 each coordinate [4Fe-4S] cluster.

It belongs to the aconitase/IPM isomerase family. LeuC type 1 subfamily. Heterodimer of LeuC and LeuD. [4Fe-4S] cluster is required as a cofactor.

The enzyme catalyses (2R,3S)-3-isopropylmalate = (2S)-2-isopropylmalate. It participates in amino-acid biosynthesis; L-leucine biosynthesis; L-leucine from 3-methyl-2-oxobutanoate: step 2/4. Catalyzes the isomerization between 2-isopropylmalate and 3-isopropylmalate, via the formation of 2-isopropylmaleate. The protein is 3-isopropylmalate dehydratase large subunit of Escherichia fergusonii (strain ATCC 35469 / DSM 13698 / CCUG 18766 / IAM 14443 / JCM 21226 / LMG 7866 / NBRC 102419 / NCTC 12128 / CDC 0568-73).